Reading from the N-terminus, the 123-residue chain is Probable histone H2B 3 (123 aa).

Residues 1 to 31 form a disordered region; that stretch reads MAPPKPSAKGAKKAAKTVSKPKDGKKRKHAR. The O-linked (GlcNAc) serine glycan is linked to serine 110. Residue lysine 118 forms a Glycyl lysine isopeptide (Lys-Gly) (interchain with G-Cter in ubiquitin) linkage.

It belongs to the histone H2B family. In terms of assembly, the nucleosome is a histone octamer containing two molecules each of H2A, H2B, H3 and H4 assembled in one H3-H4 heterotetramer and two H2A-H2B heterodimers. The octamer wraps approximately 147 bp of DNA. Post-translationally, monoubiquitination of Lys-118 gives a specific tag for epigenetic transcriptional activation and is also prerequisite for histone H3 'Lys-4' and 'Lys-79' methylation. GlcNAcylation at Ser-110 promotes monoubiquitination of Lys-118. It fluctuates in response to extracellular glucose, and associates with transcribed genes.

It localises to the nucleus. The protein resides in the chromosome. Its function is as follows. Core component of nucleosome. Nucleosomes wrap and compact DNA into chromatin, limiting DNA accessibility to the cellular machineries which require DNA as a template. Histones thereby play a central role in transcription regulation, DNA repair, DNA replication and chromosomal stability. DNA accessibility is regulated via a complex set of post-translational modifications of histones, also called histone code, and nucleosome remodeling. In Caenorhabditis elegans, this protein is Probable histone H2B 3 (his-41).